Consider the following 112-residue polypeptide: Large ribosomal subunit protein uL22 (112 aa).

It belongs to the universal ribosomal protein uL22 family. Part of the 50S ribosomal subunit.

Functionally, this protein binds specifically to 23S rRNA; its binding is stimulated by other ribosomal proteins, e.g. L4, L17, and L20. It is important during the early stages of 50S assembly. It makes multiple contacts with different domains of the 23S rRNA in the assembled 50S subunit and ribosome. The globular domain of the protein is located near the polypeptide exit tunnel on the outside of the subunit, while an extended beta-hairpin is found that lines the wall of the exit tunnel in the center of the 70S ribosome. This chain is Large ribosomal subunit protein uL22, found in Moorella thermoacetica (strain ATCC 39073 / JCM 9320).